Here is a 485-residue protein sequence, read N- to C-terminus: Hexokinase-1 (485 aa).

A Hexokinase domain is found at 21 to 468; the sequence is KELMDEIHQL…SGAGAAVIAA (448 aa). Residues 75 to 209 are hexokinase small subdomain; that stretch reads TGKESGNYLA…ELPIEIVALI (135 aa). ATP is bound by residues 86-91 and K111; that span reads DLGGTN. Substrate is bound by residues S158, 175-176, 210-211, and N237; these read TK and ND. Residues 210–457 form a hexokinase large subdomain region; that stretch reads NDTVGTLIAS…DPITIVPAED (248 aa). S245 carries the phosphoserine modification. A substrate-binding site is contributed by E269. Residue S272 is modified to Phosphoserine. Position 302 (E302) interacts with substrate. Residues 307 to 308, 344 to 348, and 419 to 423 each bind ATP; these read GY, TSYPA, and SVYNK.

Belongs to the hexokinase family. Homodimer.

It carries out the reaction a D-hexose + ATP = a D-hexose 6-phosphate + ADP + H(+). It catalyses the reaction D-fructose + ATP = D-fructose 6-phosphate + ADP + H(+). The catalysed reaction is D-glucose + ATP = D-glucose 6-phosphate + ADP + H(+). Its pathway is carbohydrate metabolism; hexose metabolism. It functions in the pathway carbohydrate degradation; glycolysis; D-glyceraldehyde 3-phosphate and glycerone phosphate from D-glucose: step 1/4. Subject to allosteric control. Substrate inhibition by ATP. Its function is as follows. Catalyzes the phosphorylation of hexose, such as D-glucose and D-fructose, to hexose 6-phosphate (D-glucose 6-phosphate and D-fructose 6-phosphate, respectively). Mediates the initial step of glycolysis by catalyzing phosphorylation of D-glucose to D-glucose 6-phosphate. This chain is Hexokinase-1 (HXK1), found in Saccharomyces cerevisiae (strain ATCC 204508 / S288c) (Baker's yeast).